We begin with the raw amino-acid sequence, 957 residues long: Ribonuclease 3-like protein 3 (957 aa).

In terms of domain architecture, RNase III 1 spans 4–142 (VEAVEKILNY…IAATVFIDVN (139 aa)). Residues 307 to 382 (NGRGELIEIC…AYHMIRALES (76 aa)) enclose the DRBM 1 domain. The RNase III 2 domain occupies 415 to 551 (VEAVEKILNY…VAGAVYIDVK (137 aa)). 2 consecutive DRBM domains span residues 566–645 (EPIY…KLSE) and 837–912 (DEKG…ALES).

In terms of biological role, ribonuclease that cleaves double-stranded RNA (dsRNA). The polypeptide is Ribonuclease 3-like protein 3 (RTL3) (Arabidopsis thaliana (Mouse-ear cress)).